A 367-amino-acid polypeptide reads, in one-letter code: Cycloaraneosene synthase sdnA (367 aa).

A signal peptide spans 1–24 (MSLYGLFTLATSYLPSVGGGAALA). Mg(2+) is bound by residues Asp115, Asn260, and Ser264. Positions 115–119 (DDQFD) match the DDXXD motif motif. Residue Asn276 is glycosylated (N-linked (GlcNAc...) asparagine).

Belongs to the terpene synthase family. Mg(2+) serves as cofactor.

The enzyme catalyses (2E,6E,10E)-geranylgeranyl diphosphate = cycloaraneosene + diphosphate. The protein operates within antibiotic biosynthesis. Its function is as follows. Cycloaraneosene synthase; part of the gene cluster that mediates the biosynthesis of sordarin and hypoxysordarin, glycoside antibiotics with a unique tetracyclic diterpene aglycone structure. First, the geranylgeranyl diphosphate synthase sdnC constructs GGDP from farnesyl diphosphate and isopentenyl diphosphate. The diterpene cyclase sdnA then catalyzes the cyclization of GGDP to afford cycloaraneosene. Cycloaraneosene is then hydroxylated four times by the putative cytochrome P450 monooxygenases sdnB, sdnE, sdnF and sdnH to give a hydroxylated cycloaraneosene derivative such as cycloaraneosene-8,9,13,19-tetraol. Although the order of the hydroxylations is unclear, at least C8, C9 and C13 of the cycloaraneosene skeleton are hydroxylated before the sordaricin formation. Dehydration of the 13-hydroxy group of the hydroxylated cycloaraneosene derivative might be catalyzed by an unassigned hypothetical protein such as sdnG and sdnP to construct the cyclopentadiene moiety. The FAD-dependent oxidoreductase sdnN is proposed to catalyze the oxidation at C9 of the hydroxylated cycloaraneosene derivative and also catalyze the Baeyer-Villiger oxidation to give the lactone intermediate. The presumed lactone intermediate would be hydrolyzed to give an acrolein moiety and a carboxylate moiety. Then, [4+2]cycloaddition would occur between the acrolein moiety and the cyclopentadiene moiety to give sordaricin. SdnN might also be involved in the [4+2]cycloaddition after the hypothesized oxidation to accommodate the oxidized product and prompt the [4+2]cycloaddition. GDP-6-deoxy-D-altrose may be biosynthesized from GDP-D-mannose by the putative GDP-mannose-4,6-dehydratase sdnI and the short-chain dehydrogenase sdnK. The glycosyltransferase sdnJ catalyzes the attachment of 6-deoxy-D-altrose onto the 19-hydroxy group of sordaricin to give 4'-O-demethylsordarin. The methyltransferase sdnD would complete the biosynthesis of sordarin. Sordarin can be further modified into hypoxysordarin. The unique acyl chain at the 3'-hydroxy group of hypoxysordarin would be constructed by an iterative type I PKS sdnO and the trans-acting polyketide methyltransferase sdnL. SdnL would be responsible for the introduction of an alpha-methyl group of the polyketide chain. Alternatively, the beta-lactamase-like protein sdnR might be responsible for the cleavage and transfer of the polyketide chain from the PKS sdnO to sordarin. Two putative cytochrome P450 monooxygenases, sdnQ and sdnT, might catalyze the epoxidations of the polyketide chain to complete the biosynthesis of hypoxysordarin. Transcriptional regulators sdnM and sdnS are presumably encoded for the transcriptional regulation of the expression of the sdn gene cluster. The sequence is that of Cycloaraneosene synthase sdnA from Sordaria araneosa (Pleurage araneosa).